The primary structure comprises 356 residues: GTPase Obg (356 aa).

Residues 1 to 159 (MKFLDEAKVY…RWIWLRMKLI (159 aa)) form the Obg domain. Residues 160–327 (ADAGLVGLPN…ALRKLADVVG (168 aa)) enclose the OBG-type G domain. GTP-binding positions include 166–173 (GLPNAGKS), 191–195 (FTTLH), 212–215 (DIPG), 279–282 (NKID), and 308–310 (SGA). Mg(2+) contacts are provided by Ser-173 and Thr-193. The disordered stretch occupies residues 327–356 (GEQPVSSKAKNAVESAATEEPWAAPVPPQG).

It belongs to the TRAFAC class OBG-HflX-like GTPase superfamily. OBG GTPase family. As to quaternary structure, monomer. Mg(2+) serves as cofactor.

The protein localises to the cytoplasm. In terms of biological role, an essential GTPase which binds GTP, GDP and possibly (p)ppGpp with moderate affinity, with high nucleotide exchange rates and a fairly low GTP hydrolysis rate. Plays a role in control of the cell cycle, stress response, ribosome biogenesis and in those bacteria that undergo differentiation, in morphogenesis control. In Bradyrhizobium sp. (strain ORS 278), this protein is GTPase Obg.